The sequence spans 349 residues: Flap endonuclease 1-B (349 aa).

The interval 1–105 is N-domain; that stretch reads MGIKGLTKLL…GELAKRLARR (105 aa). Aspartate 34 lines the Mg(2+) pocket. Arginine 71 is a binding site for DNA. Mg(2+)-binding residues include aspartate 87, glutamate 159, glutamate 161, aspartate 180, and aspartate 182. An I-domain region spans residues 123 to 254; the sequence is DMEKYSKRTV…QTALKLIRQH (132 aa). Glutamate 159 is a binding site for DNA. Residues glycine 232 and aspartate 234 each coordinate DNA. Mg(2+) is bound at residue aspartate 234.

It belongs to the XPG/RAD2 endonuclease family. FEN1 subfamily. In terms of assembly, interacts with PCNA. Three molecules of FEN1 bind to one PCNA trimer with each molecule binding to one PCNA monomer. PCNA stimulates the nuclease activity without altering cleavage specificity. Mg(2+) serves as cofactor. In terms of processing, phosphorylated. Phosphorylation upon DNA damage induces relocalization to the nuclear plasma.

The protein resides in the nucleus. Its subcellular location is the nucleolus. It is found in the nucleoplasm. The protein localises to the mitochondrion. Its function is as follows. Structure-specific nuclease with 5'-flap endonuclease and 5'-3' exonuclease activities involved in DNA replication and repair. During DNA replication, cleaves the 5'-overhanging flap structure that is generated by displacement synthesis when DNA polymerase encounters the 5'-end of a downstream Okazaki fragment. It enters the flap from the 5'-end and then tracks to cleave the flap base, leaving a nick for ligation. Also involved in the long patch base excision repair (LP-BER) pathway, by cleaving within the apurinic/apyrimidinic (AP) site-terminated flap. Acts as a genome stabilization factor that prevents flaps from equilibrating into structures that lead to duplications and deletions. Also possesses 5'-3' exonuclease activity on nicked or gapped double-stranded DNA, and exhibits RNase H activity. Also involved in replication and repair of rDNA and in repairing mitochondrial DNA. This is Flap endonuclease 1-B from Physcomitrium patens (Spreading-leaved earth moss).